An 835-amino-acid polypeptide reads, in one-letter code: Cap-specific mRNA (nucleoside-2'-O-)-methyltransferase 1 (835 aa).

The Bipartite nuclear localization signal signature appears at 2-19 (RRRNDPECTAPIKKQKKR). Residues 24 to 68 (ALNLSAASGDEPPSSVNHAAKASTTSLSGSDSETEGKQHGSDSFD) are disordered. Ser28, Ser31, Ser53, Ser66, and Ser91 each carry phosphoserine. Residues 37–54 (SSVNHAAKASTTSLSGSD) show a composition bias toward polar residues. Residues 57–68 (TEGKQHGSDSFD) show a composition bias toward basic and acidic residues. The G-patch domain occupies 87 to 133 (YNSVSQKLMAKMGFREGEGLGKYSQGRKDIVEASNQKGRRGLGLTLQ). At Lys108 the chain carries N6-acetyllysine. Substrate-binding positions include 203-207 (KSVFD) and Arg218. The 220-residue stretch at 231–450 (FFLNRAAMKM…ERYVVCKGLK (220 aa)) folds into the RrmJ-type SAM-dependent 2'-O-MTase domain. Asn234 serves as a coordination point for S-adenosyl-L-methionine. Residue Lys239 is part of the active site. S-adenosyl-L-methionine is bound by residues 277 to 283 (CAGPGGF) and 335 to 336 (DI). Asp364 is a catalytic residue. Substrate is bound at residue 374–376 (NLQ). Residue Lys404 is the Proton acceptor of the active site. Asn439 is a substrate binding site. Positions 727 to 835 (SSGTPKLSYT…VLSFIQTHSA (109 aa)) are interaction with POLR2A. Residues 752–786 (RTVNEPWTMGFSKSFKRKFFYNKKTKISTFDLPAD) form the WW domain.

In terms of assembly, interacts with POLR2A (via C-terminus).

Its subcellular location is the nucleus. The catalysed reaction is a 5'-end (N(7)-methyl 5'-triphosphoguanosine)-ribonucleoside in mRNA + S-adenosyl-L-methionine = a 5'-end (N(7)-methyl 5'-triphosphoguanosine)-(2'-O-methyl-ribonucleoside) in mRNA + S-adenosyl-L-homocysteine + H(+). In terms of biological role, S-adenosyl-L-methionine-dependent methyltransferase that mediates mRNA cap1 2'-O-ribose methylation to the 5'-cap structure of mRNAs. Methylates the ribose of the first nucleotide of a m(7)GpppG-capped mRNA and small nuclear RNA (snRNA) to produce m(7)GpppRm (cap1). Displays a preference for cap0 transcripts. Cap1 modification is linked to higher levels of translation. May be involved in the interferon response pathway. The chain is Cap-specific mRNA (nucleoside-2'-O-)-methyltransferase 1 (CMTR1) from Ailuropoda melanoleuca (Giant panda).